The following is a 505-amino-acid chain: ATP nucleosidase Cap17 (505 aa).

The interval 1–229 (MTNTNNEYVL…RLSEIAVELL (229 aa)) is cyclic oligonucleotide sensing-domain. Residues 239–505 (LHTPSVLILT…DYLQHGWIRA (267 aa)) are purine nucleoside phosphorylase domain.

Belongs to the Cap17 family.

It carries out the reaction ATP + H2O = D-ribose 5-triphosphate + adenine. The catalysed reaction is dATP + H2O = 2-deoxyribose 5-triphosphate + adenine. Effector protein with (d)ATP degrading activity of a CBASS antivirus system. CBASS (cyclic oligonucleotide-based antiphage signaling system) provides immunity against bacteriophage. A CD-NTase protein synthesizes cyclic nucleotides in response to infection; these serve as specific second messenger signals. The signals activate a diverse range of effectors, leading to bacterial cell death and thus abortive phage infection. A type III CBASS system. Expression of this CBASS system (Cap18-Cap6-Cap7-CdnC-CapW-Cap17) in a susceptible E.coli (strain MG1655) confers resistance to bacteriophage P1, leading to cell lysis. By 50 minutes post-infection, ATP levels are markedly reduced while dATP has been eliminated. The C-terminal purine nucleoside phosphorylase (PNP) domain cleaves the N-glycosidic bond of (d)ATP to release adenine and a sugar triphosphate; has no activity on other (d)NTPs, nor on DNA or RNA. In vivo during phage infection has pleoitropic effects on nucleotide accumulation. This protein may be activated by the cognate CD-NTase (CdnC). This Escherichia coli (strain KTE188) protein is ATP nucleosidase Cap17.